The following is a 121-amino-acid chain: Large ribosomal subunit protein bL12 (121 aa).

The protein belongs to the bacterial ribosomal protein bL12 family. As to quaternary structure, homodimer. Part of the ribosomal stalk of the 50S ribosomal subunit. Forms a multimeric L10(L12)X complex, where L10 forms an elongated spine to which 2 to 4 L12 dimers bind in a sequential fashion. Binds GTP-bound translation factors.

Its function is as follows. Forms part of the ribosomal stalk which helps the ribosome interact with GTP-bound translation factors. Is thus essential for accurate translation. The chain is Large ribosomal subunit protein bL12 from Pseudomonas fluorescens (strain ATCC BAA-477 / NRRL B-23932 / Pf-5).